Consider the following 178-residue polypeptide: Caveolin-1 (178 aa).

Ser-2 carries the post-translational modification N-acetylserine. Ser-2 carries the post-translational modification Phosphoserine. The required for homooligomerization stretch occupies residues 2–94 (SGGKYVDAEG…WKASFTTFTV (93 aa)). Residues 2–104 (SGGKYVDAEG…TKYWFYRLLS (103 aa)) lie on the Cytoplasmic side of the membrane. The residue at position 5 (Lys-5) is an N6-acetyllysine; alternate. Lys-5 is covalently cross-linked (Glycyl lysine isopeptide (Lys-Gly) (interchain with G-Cter in ubiquitin); alternate). Tyr-6 bears the Phosphotyrosine mark. Tyr-14 carries the phosphotyrosine; by ABL1 modification. Position 25 is a phosphotyrosine (Tyr-25). Glycyl lysine isopeptide (Lys-Gly) (interchain with G-Cter in ubiquitin) cross-links involve residues Lys-26, Lys-30, Lys-39, Lys-47, and Lys-57. Residues 82-94 (DGIWKASFTTFTV) are interaction with CAVIN3. The helical intramembrane region spans 105 to 125 (ALLGIPLALLWGIYFAILSFL). Topologically, residues 126 to 178 (HIWAVVPCIRSYLIEIQCISRVYSICIHTFCDPLFEAIGKVFSNIRATVQKEI) are cytoplasmic. The tract at residues 131-142 (VPCIRSYLIEIQ) is interacts with SPRY1, SPRY2, SPRY3 and SPRY4. S-palmitoyl cysteine attachment occurs at residues Cys-133, Cys-143, and Cys-156. The interval 149–160 (SICIHTFCDPLF) is interacts with SPRY1, SPRY2, and SPRY4. The interacts with SPRY1, SPRY2, SPRY3 and SPRY4 stretch occupies residues 167–178 (FSNIRATVQKEI).

It belongs to the caveolin family. As to quaternary structure, homooligomer. Interacts with GLIPR2. Interacts with NOSTRIN. Interacts with SNAP25 and STX1A. Interacts (via the N-terminus) with DPP4; the interaction is direct. Interacts with CTNNB1, CDH1 and JUP. Interacts with PACSIN2; this interaction induces membrane tubulation. Interacts with SLC7A9. Interacts with BMX and BTK. Interacts with TGFBR1. Interacts with CAVIN3 (via leucine-zipper domain) in a cholesterol-sensitive manner. Interacts with CAVIN1. Interacts with EHD2 in a cholesterol-dependent manner. Forms a ternary complex with UBXN6 and VCP; mediates CAV1 targeting to lysosomes for degradation. Interacts with ABCG1; this interaction regulates ABCG1-mediated cholesterol efflux. Interacts with NEU3; this interaction enhances NEU3 sialidase activity within caveola. Interacts (via C-terminus) with SPRY1, SPRY2 (via C-terminus), SPRY3, and SPRY4. Interacts with IGFBP5; this interaction allows trafficking of IGFBP5 from the plasma membrane to the nucleus. In terms of processing, phosphorylated at Tyr-14 by ABL1 in response to oxidative stress. Post-translationally, ubiquitinated. Undergo monoubiquitination and multi- and/or polyubiquitination. Monoubiquitination of N-terminal lysines promotes integration in a ternary complex with UBXN6 and VCP which promotes oligomeric CAV1 targeting to lysosomes for degradation. Ubiquitinated by ZNRF1; leading to degradation and modulation of the TLR4-mediated immune response.

The protein resides in the golgi apparatus membrane. It is found in the cell membrane. Its subcellular location is the membrane. The protein localises to the caveola. It localises to the membrane raft. Its function is as follows. May act as a scaffolding protein within caveolar membranes. Forms a stable heterooligomeric complex with CAV2 that targets to lipid rafts and drives caveolae formation. Mediates the recruitment of CAVIN proteins (CAVIN1/2/3/4) to the caveolae. Interacts directly with G-protein alpha subunits and can functionally regulate their activity. Involved in the costimulatory signal essential for T-cell receptor (TCR)-mediated T-cell activation. Its binding to DPP4 induces T-cell proliferation and NF-kappa-B activation in a T-cell receptor/CD3-dependent manner. Recruits CTNNB1 to caveolar membranes and may regulate CTNNB1-mediated signaling through the Wnt pathway. Negatively regulates TGFB1-mediated activation of SMAD2/3 by mediating the internalization of TGFBR1 from membrane rafts leading to its subsequent degradation. Binds 20(S)-hydroxycholesterol (20(S)-OHC). This Ornithorhynchus anatinus (Duckbill platypus) protein is Caveolin-1 (CAV1).